Reading from the N-terminus, the 337-residue chain is Putative carbonic anhydrase-like protein 2 (337 aa).

An N-terminal signal peptide occupies residues 1-16 (MIPWLLTACIYPCVIG). Positions 17–274 (PDFWGLLHGD…LNGRLVRTNI (258 aa)) constitute an Alpha-carbonic anhydrase domain. The active site involves Tyr140. The N-linked (GlcNAc...) asparagine glycan is linked to Asn188. 212 to 213 (TF) is a binding site for substrate.

Belongs to the alpha-carbonic anhydrase family.

The protein localises to the secreted. This Caenorhabditis elegans protein is Putative carbonic anhydrase-like protein 2 (cah-2).